We begin with the raw amino-acid sequence, 259 residues long: Putative zinc metalloprotease Rip2 (259 aa).

Transmembrane regions (helical) follow at residues P14–G34 and P39–L59. Residue H60 coordinates Zn(2+). E61 is a catalytic residue. H64 serves as a coordination point for Zn(2+). A run of 4 helical transmembrane segments spans residues G97 to V117, T128 to A148, I156 to V176, and L215 to F235.

This sequence belongs to the peptidase M50B family. It depends on Zn(2+) as a cofactor.

The protein localises to the cell membrane. The sequence is that of Putative zinc metalloprotease Rip2 (rip2) from Mycobacterium tuberculosis (strain ATCC 35801 / TMC 107 / Erdman).